Reading from the N-terminus, the 178-residue chain is Small ribosomal subunit protein uS7c (178 aa).

Residues 137-146 (QKKEEIEKSK) are compositionally biased toward basic and acidic residues. The tract at residues 137–178 (QKKEEIEKSKSPVNNNKKFISKNKKSKNKKQKKRLKRKKNIY) is disordered. Positions 155-178 (FISKNKKSKNKKQKKRLKRKKNIY) are enriched in basic residues.

The protein belongs to the universal ribosomal protein uS7 family. Part of the 30S ribosomal subunit.

It is found in the plastid. One of the primary rRNA binding proteins, it binds directly to 16S rRNA where it nucleates assembly of the head domain of the 30S subunit. The sequence is that of Small ribosomal subunit protein uS7c (rps7) from Euglena longa (Euglenophycean alga).